Consider the following 294-residue polypeptide: UPF0761 membrane protein YPTS_0028 (294 aa).

The next 7 membrane-spanning stretches (helical) occupy residues 44–64 (LLSL…FPMF), 67–87 (ISIK…GDII), 108–128 (GLIV…NIIW), 136–156 (LVFS…LVGA), 185–205 (VFPL…VPTV), 212–232 (ALIG…GFAM), and 246–266 (VLAV…IVLL).

This sequence belongs to the UPF0761 family.

Its subcellular location is the cell inner membrane. This chain is UPF0761 membrane protein YPTS_0028, found in Yersinia pseudotuberculosis serotype IB (strain PB1/+).